The following is a 94-amino-acid chain: Putative RNA-binding protein RbpD (94 aa).

Residues threonine 2–proline 79 enclose the RRM domain. The disordered stretch occupies residues arginine 73–tyrosine 94. Basic and acidic residues predominate over residues lysine 78–tyrosine 94.

The protein is Putative RNA-binding protein RbpD (rbpD) of Nostoc sp. (strain PCC 7120 / SAG 25.82 / UTEX 2576).